A 462-amino-acid polypeptide reads, in one-letter code: Cysteine desulfurase, mitochondrial (462 aa).

Residues 132 to 133 (AT), N212, Q240, and 260 to 262 (SGH) each bind pyridoxal 5'-phosphate. At K263 the chain carries N6-(pyridoxal phosphate)lysine. Residue T300 participates in pyridoxal 5'-phosphate binding. C386 (cysteine persulfide intermediate) is an active-site residue. Residue C386 participates in [2Fe-2S] cluster binding.

The protein belongs to the class-V pyridoxal-phosphate-dependent aminotransferase family. NifS/IscS subfamily. Component of the mitochondrial core iron-sulfur cluster (ISC) assembly complex at least composed of the cystein desulfurase Nfs1, the scaffold protein IscU, the accessory protein bcn92/Isd11/Lyrm4, and probably fh/frataxin. Interacts with bcn92/Isd11/Lyrm4 and IscU. It depends on pyridoxal 5'-phosphate as a cofactor. Ubiquitous expression at high levels in any life stage.

The protein resides in the mitochondrion. Its subcellular location is the nucleus. The catalysed reaction is (sulfur carrier)-H + L-cysteine = (sulfur carrier)-SH + L-alanine. Active when in complex with bcn92/Isd11/Lyrm4. L-cysteine binding kinetics are reduced in the presence of bcn92/Isd11/Lyrm4 and IscU. Activity is regulated by other components of the mitochondrial core iron-sulfur cluster (ISC) complex; Activity is reduced in the presence of IscU but enhanced when both IscU and fh/frataxin are present. Catalyzes the removal of elemental sulfur from cysteine to produce alanine. It supplies the inorganic sulfur for iron-sulfur (Fe-S) clusters. This Drosophila melanogaster (Fruit fly) protein is Cysteine desulfurase, mitochondrial.